The following is a 363-amino-acid chain: Chorismate synthase (363 aa).

The NADP(+) site is built by Arg48 and Arg54. FMN-binding positions include 125 to 127 (RSS), 237 to 238 (NA), Gly277, 292 to 296 (KPTSS), and Arg318.

This sequence belongs to the chorismate synthase family. Homotetramer. It depends on FMNH2 as a cofactor.

It catalyses the reaction 5-O-(1-carboxyvinyl)-3-phosphoshikimate = chorismate + phosphate. It functions in the pathway metabolic intermediate biosynthesis; chorismate biosynthesis; chorismate from D-erythrose 4-phosphate and phosphoenolpyruvate: step 7/7. Catalyzes the anti-1,4-elimination of the C-3 phosphate and the C-6 proR hydrogen from 5-enolpyruvylshikimate-3-phosphate (EPSP) to yield chorismate, which is the branch point compound that serves as the starting substrate for the three terminal pathways of aromatic amino acid biosynthesis. This reaction introduces a second double bond into the aromatic ring system. The sequence is that of Chorismate synthase from Pseudomonas putida (strain W619).